The following is a 29-amino-acid chain: SKYESEGVARSEELQEVHQAFADAGRKPI.

The span at Ser1–Glu16 shows a compositional bias: basic and acidic residues. The segment at Ser1–Ile29 is disordered.

As to quaternary structure, muscle myosin is a hexameric protein that consists of 2 heavy chain subunits (MHC), 2 alkali light chain subunits (MLC) and 2 regulatory light chain subunits (MLC-2).

The protein resides in the cytoplasm. Its subcellular location is the myofibril. Functionally, muscle contraction. In Bombyx mori (Silk moth), this protein is Myosin heavy chain, muscle.